The chain runs to 154 residues: D-aminoacyl-tRNA deacylase (154 aa).

The Gly-cisPro motif, important for rejection of L-amino acids motif lies at 142–143 (GP).

It belongs to the DTD family. Homodimer.

It localises to the cytoplasm. The enzyme catalyses glycyl-tRNA(Ala) + H2O = tRNA(Ala) + glycine + H(+). The catalysed reaction is a D-aminoacyl-tRNA + H2O = a tRNA + a D-alpha-amino acid + H(+). Its function is as follows. An aminoacyl-tRNA editing enzyme that deacylates mischarged D-aminoacyl-tRNAs. Also deacylates mischarged glycyl-tRNA(Ala), protecting cells against glycine mischarging by AlaRS. Acts via tRNA-based rather than protein-based catalysis; rejects L-amino acids rather than detecting D-amino acids in the active site. By recycling D-aminoacyl-tRNA to D-amino acids and free tRNA molecules, this enzyme counteracts the toxicity associated with the formation of D-aminoacyl-tRNA entities in vivo and helps enforce protein L-homochirality. The sequence is that of D-aminoacyl-tRNA deacylase from Polaromonas naphthalenivorans (strain CJ2).